The sequence spans 383 residues: 8-amino-7-oxononanoate synthase (383 aa).

Arg-21 provides a ligand contact to substrate. 108–109 (GY) lines the pyridoxal 5'-phosphate pocket. His-133 lines the substrate pocket. The pyridoxal 5'-phosphate site is built by Ser-179, His-207, and Thr-233. Residue Lys-236 is modified to N6-(pyridoxal phosphate)lysine. Thr-350 is a substrate binding site.

The protein belongs to the class-II pyridoxal-phosphate-dependent aminotransferase family. BioF subfamily. Homodimer. Pyridoxal 5'-phosphate is required as a cofactor.

The catalysed reaction is 6-carboxyhexanoyl-[ACP] + L-alanine + H(+) = (8S)-8-amino-7-oxononanoate + holo-[ACP] + CO2. It functions in the pathway cofactor biosynthesis; biotin biosynthesis. In terms of biological role, catalyzes the decarboxylative condensation of pimeloyl-[acyl-carrier protein] and L-alanine to produce 8-amino-7-oxononanoate (AON), [acyl-carrier protein], and carbon dioxide. The chain is 8-amino-7-oxononanoate synthase from Yersinia pestis bv. Antiqua (strain Angola).